The sequence spans 443 residues: Magnesium transporter MRS2-10 (443 aa).

Residues 1–33 are disordered; sequence MSELKERLLPPRPASAINLRGDAGSRPSPSGRQ. Helical transmembrane passes span 379-399 and 415-435; these read LLLTTATFVVAIFGVVAGIFG and WVLAITGVCGLVVFLAFLWYY. The short motif at 399–401 is the Required for magnesium transport activity element; it reads GMN.

Belongs to the CorA metal ion transporter (MIT) (TC 1.A.35.5) family. As to expression, expressed in the whole plant.

The protein resides in the cell membrane. Its function is as follows. High-affinity magnesium transporter that mediates the influx of magnesium. Involved in tolerance to Aluminum. In Arabidopsis thaliana (Mouse-ear cress), this protein is Magnesium transporter MRS2-10 (MRS2-10).